We begin with the raw amino-acid sequence, 313 residues long: Protein FixB (313 aa).

255 to 283 (LYLAVGISGQIQHMVGANASQTIFAINKD) lines the FAD pocket.

It belongs to the ETF alpha-subunit/FixB family. In terms of assembly, heterodimer of FixA and FixB.

It participates in amine and polyamine metabolism; carnitine metabolism. Required for anaerobic carnitine reduction. May bring reductant to CaiA. In Escherichia coli O81 (strain ED1a), this protein is Protein FixB.